Consider the following 217-residue polypeptide: Large ribosomal subunit protein uL3 (217 aa).

The span at 134–146 (GRATHGNSRSHNV) shows a compositional bias: polar residues. Residues 134–154 (GRATHGNSRSHNVPGSIGMAQ) form a disordered region. At Gln-154 the chain carries N5-methylglutamine.

It belongs to the universal ribosomal protein uL3 family. In terms of assembly, part of the 50S ribosomal subunit. Forms a cluster with proteins L14 and L19. Post-translationally, methylated by PrmB.

Functionally, one of the primary rRNA binding proteins, it binds directly near the 3'-end of the 23S rRNA, where it nucleates assembly of the 50S subunit. The polypeptide is Large ribosomal subunit protein uL3 (Burkholderia cenocepacia (strain HI2424)).